Here is a 340-residue protein sequence, read N- to C-terminus: Ketol-acid reductoisomerase (NADP(+)) (340 aa).

A KARI N-terminal Rossmann domain is found at 2-181; sequence AKVFYNGDIN…GSARAGVIET (180 aa). Residues 25–28, Arg-48, Ser-52, and 82–85 each bind NADP(+); these read YGSQ and DEHQ. Residue His-107 is part of the active site. Position 133 (Gly-133) interacts with NADP(+). The KARI C-terminal knotted domain occupies 182 to 327; it reads TFQEETETDL…RELREMMPFV (146 aa). The Mg(2+) site is built by Asp-190, Glu-194, Glu-226, and Glu-230. Substrate is bound at residue Ser-251.

Belongs to the ketol-acid reductoisomerase family. The cofactor is Mg(2+).

It catalyses the reaction (2R)-2,3-dihydroxy-3-methylbutanoate + NADP(+) = (2S)-2-acetolactate + NADPH + H(+). The enzyme catalyses (2R,3R)-2,3-dihydroxy-3-methylpentanoate + NADP(+) = (S)-2-ethyl-2-hydroxy-3-oxobutanoate + NADPH + H(+). It participates in amino-acid biosynthesis; L-isoleucine biosynthesis; L-isoleucine from 2-oxobutanoate: step 2/4. It functions in the pathway amino-acid biosynthesis; L-valine biosynthesis; L-valine from pyruvate: step 2/4. Functionally, involved in the biosynthesis of branched-chain amino acids (BCAA). Catalyzes an alkyl-migration followed by a ketol-acid reduction of (S)-2-acetolactate (S2AL) to yield (R)-2,3-dihydroxy-isovalerate. In the isomerase reaction, S2AL is rearranged via a Mg-dependent methyl migration to produce 3-hydroxy-3-methyl-2-ketobutyrate (HMKB). In the reductase reaction, this 2-ketoacid undergoes a metal-dependent reduction by NADPH to yield (R)-2,3-dihydroxy-isovalerate. This is Ketol-acid reductoisomerase (NADP(+)) from Halalkalibacterium halodurans (strain ATCC BAA-125 / DSM 18197 / FERM 7344 / JCM 9153 / C-125) (Bacillus halodurans).